A 573-amino-acid chain; its full sequence is Developmental and secondary metabolism regulator veA (573 aa).

Over residues 1 to 11 (MATLAAPPPPL) the composition is skewed to pro residues. Disordered stretches follow at residues 1–24 (MATL…SRIT) and 39–63 (QPKR…DPPP). The 204-residue stretch at 27-230 (GKKITYKLNI…AEQGCRVRIR (204 aa)) folds into the Velvet domain. The Nuclear localization signal motif lies at 41–46 (KRARAC). 2 positions are modified to phosphothreonine: Thr-167 and Thr-170. Ser-183 bears the Phosphoserine mark. 3 disordered regions span residues 236–295 (RRRG…RRPS), 307–367 (YQRP…SYQS), and 384–573 (SHIP…ATMR). Over residues 241-260 (KRTEDYDYDNERGYNNRRPD) the composition is skewed to basic and acidic residues. Tyr-254 carries the phosphotyrosine modification. 2 stretches are compositionally biased toward pro residues: residues 318–339 (SSTP…PSTP) and 347–361 (PAPP…PPLH). Residues 387–412 (PQQTTTPTHPYSPRSSISHSRNQSIS) show a composition bias toward low complexity. Residues 452 to 493 (PSVNSRSKTPSNMITSLPPIQSLSELPSTTSQPSSAIGSSPA) are compositionally biased toward polar residues. The segment at 459–498 (KTPSNMITSLPPIQSLSELPSTTSQPSSAIGSSPANEPGP) is PEST. Residues 510–522 (RTYEESFGHDDRP) show a composition bias toward basic and acidic residues.

It belongs to the velvet family. VeA subfamily. As to quaternary structure, component of the heterotrimeric velvet complex composed of laeA, veA and velB; VeA acting as a bridging protein between laeA and velB. Interacts with the light-sensing phytochrome fphA. Interacts with llmF. Post-translationally, phosphorylated at Thr-167, Thr-170, Ser-183 and Tyr-254. Thr-167 should be phosphorylated and T170 and S183 should be dephosphorylated to achieve light induction of conidiation. Phosphorylation of Ser-183 and Tyr-254 influence sterigmatocystin production in a light-independent manner. Phosphorylation of Thr-167 and Thr-170 modulates expression of veA.

It is found in the nucleus. Its subcellular location is the cytoplasm. Its function is as follows. Component of the velvet transcription factor complex that controls sexual/asexual developmental ratio in response to light, promoting sexual development in the darkness while stimulating asexual sporulation under illumination. The velvet complex acts as a global regulator for secondary metabolite gene expression. Controls the expression of the sterigmatocystin and penicillin gene clusters. Represses the cryptic ors gene cluster producing orsellinic acid and its F9775 derivatives in a laeA-independent manner. Required for full induction of faoA gene expression by fructosyl amines. Positively regulates the expression of the early sexual development gene esdC. Controls the expression of mannoprotein mnpA. In Emericella nidulans (strain FGSC A4 / ATCC 38163 / CBS 112.46 / NRRL 194 / M139) (Aspergillus nidulans), this protein is Developmental and secondary metabolism regulator veA.